The sequence spans 301 residues: Probable alpha-L-glutamate ligase 1 (301 aa).

Residues 104–287 (MQLMSRRGIG…VAGAIIEFVE (184 aa)) enclose the ATP-grasp domain. ATP is bound by residues Lys141, 178-179 (EY), Asp187, and 211-213 (RSN). Mg(2+) contacts are provided by Asp248, Glu260, and Asn262. Residues Asp248, Glu260, and Asn262 each contribute to the Mn(2+) site.

Belongs to the RimK family. Mg(2+) serves as cofactor. Mn(2+) is required as a cofactor.

The sequence is that of Probable alpha-L-glutamate ligase 1 from Shewanella putrefaciens (strain CN-32 / ATCC BAA-453).